Consider the following 922-residue polypeptide: MMENGGYVGQYGGEENYMEQEEEWEREGLLDPAWEKQQKKTFTAWCNSHLRKAGTSIENIEDDFRNGLKLMLLLEVISGETLPKPDRGKMRFHKIANVNKALDFIASKGVKLVSIGAEEIVDGNLKMTLGMIWTIILRFAIQDISVEEMTAKEGLLLWCQRKTAPYKNVNVQNFHLSFKDGLAFCALIHRHRPDLIDYSKLSKDNPLENLNTAFDVAEKYLDIPRMLDPDDLINTPKPDERAIMTYVSCYYHAFQGAQQPGSTPFVIHLTKTGLSYRFFVRLFAAETAANRICKVLKVNQENERLMEEYERLASDLLEWIRRTMPWLNSRQSDSTLAGVQKKLEEYRTYRRKHKPPRVEQKAKLETNFNTLQTKLRLSNRPAYMPTEGKMVSDITNSWKGLEHAEKAFEEWLLAETMRLERLEHLAQKFKHKADTHEDWTKGKEEMLQSQDFRNCKLNELKALKKKHEAFESDLAAHQDRVEQIAAIAQELNTLEYHDCASVNARCQRICDQWDRLGALTQRRRQGLDEAERILEKIDLLHLEFAKRAAPFNNWLDGAREDLVDMFIVHTMEEIQGLIQAHDQFKATLGEADKEFNVIIGLVRDAEAIVKQEQVPGGLVNPYTTLSADLISRKWSEVRALVPQRDQTLANELRKQQNNEMLRRQFAEKANAVGPWIERQMDAVTAIGMGISGSLEEQLHRLKEYEQAVYAYKPSIEELEKIHQAVQESMIFENRYTHYTMETLRVGWEQLLTSINRNINEVENQILTRDSKGITQEQLTEFRSSFNHFDKNRTGRLAPEEFKSCLVSLGYSIGKDKQGDMDFQRILAVVDPNASGYVQFDAFLDFMTRESTDTDTAEQVIDSFRILASDRPYILPDELRRELPPDQAEYCIQRMPPYKGPNAIPGALDYMSFSTALYGESDL.

Positions 1-252 (MMENGGYVGQ…IMTYVSCYYH (252 aa)) are actin-binding. Calponin-homology (CH) domains lie at 36 to 140 (KQQK…LRFA) and 149 to 255 (MTAK…HAFQ). Spectrin repeat units lie at residues 253 to 393 (AFQG…MVSD), 394 to 508 (ITNS…RCQR), 509 to 629 (ICDQ…SADL), and 630 to 742 (ISRK…TMET). 2 consecutive EF-hand domains span residues 776–811 (EQLT…LGYS) and 817–852 (QGDM…ESTD). Residues Asp789, Asn791, Thr793, Arg795, and Glu800 each coordinate Ca(2+).

The protein belongs to the alpha-actinin family. Homodimer; antiparallel.

In terms of biological role, F-actin cross-linking protein which is thought to anchor actin to a variety of intracellular structures. This is a bundling protein. This is Alpha-actinin, sarcomeric (Actn) from Anopheles gambiae (African malaria mosquito).